Consider the following 527-residue polypeptide: Oviduct-specific glycoprotein (527 aa).

Positions M1–A21 are cleaved as a signal peptide. The 364-residue stretch at H22–A385 folds into the GH18 domain. Cysteines 26 and 51 form a disulfide. N62 carries N-linked (GlcNAc...) asparagine glycosylation. Residues A71–R72, G98–N101, Y142, L211–D214, and W355 each bind chitin. N-linked (GlcNAc...) asparagine glycans are attached at residues N402 and N441. The interval T433 to D527 is disordered.

It belongs to the glycosyl hydrolase 18 family. As to expression, oviduct.

It localises to the cytoplasmic vesicle. Its subcellular location is the secretory vesicle. Functionally, binds to oocyte zona pellucida in vivo. May play a role in the fertilization process and/or early embryonic development. The chain is Oviduct-specific glycoprotein (OVGP1) from Sus scrofa (Pig).